A 32-amino-acid polypeptide reads, in one-letter code: Parigidin-br1 (32 aa).

Residues 1–32 (GGSVPCGESCVFIPCITSLAGCSCKNKVCYYD) constitute a cross-link (cyclopeptide (Gly-Asp)). Disulfide bonds link cysteine 6–cysteine 22, cysteine 10–cysteine 24, and cysteine 15–cysteine 29.

This is a cyclic peptide. As to expression, expressed in leaves, flowers, peduncles and seeds (at protein level).

Its function is as follows. Probably participates in a plant defense mechanism. Reduces growth of and increases mortality in larvae of D.saccharalis. Kills cultured SF-9 cells of S.frugiperda probably by disrupting plasma membranes. Has hemolytic activity against human erythrocytes. Has no antibacterial activity against E.coli strain ATCC 8739 and S.aureus strain ATCC 25923. In Palicourea rigida, this protein is Parigidin-br1.